Reading from the N-terminus, the 783-residue chain is E3 UFM1-protein ligase 1 homolog (783 aa).

Positions 406-476 (TLGTTHDADE…DAVQQSANSS (71 aa)) are disordered. The segment covering 446–457 (KSTKKHQRGRAA) has biased composition (basic residues).

The protein belongs to the UFL1 family.

In terms of biological role, E3 UFM1-protein ligase that mediates ufmylation of target proteins. The polypeptide is E3 UFM1-protein ligase 1 homolog (Drosophila grimshawi (Hawaiian fruit fly)).